Reading from the N-terminus, the 361-residue chain is Tryptophan--tRNA ligase, mitochondrial (361 aa).

The transit peptide at 1–16 directs the protein to the mitochondrion; sequence MAKLPKITSLLPHSRV. Residues Gln21 and 27 to 30 contribute to the ATP site; that span reads HIGN. The 'HIGH' region signature appears at 22 to 30; the sequence is PTGIPHIGN. Asp165 is a binding site for L-tryptophan. Residues 177 to 179, 225 to 229, and Lys228 contribute to the ATP site; these read GKD and KMSKS. The short motif at 225–229 is the 'KMSKS' region element; that stretch reads KMSKS.

It belongs to the class-I aminoacyl-tRNA synthetase family. In terms of assembly, homodimer.

The protein localises to the mitochondrion matrix. It catalyses the reaction tRNA(Trp) + L-tryptophan + ATP = L-tryptophyl-tRNA(Trp) + AMP + diphosphate + H(+). The protein is Tryptophan--tRNA ligase, mitochondrial of Schizosaccharomyces pombe (strain 972 / ATCC 24843) (Fission yeast).